A 338-amino-acid polypeptide reads, in one-letter code: 1-aminocyclopropane-1-carboxylate deaminase (338 aa).

At Lys-51 the chain carries N6-(pyridoxal phosphate)lysine. Residue Ser-78 is the Nucleophile of the active site.

Belongs to the ACC deaminase/D-cysteine desulfhydrase family. Homotrimer. It depends on pyridoxal 5'-phosphate as a cofactor.

The enzyme catalyses 1-aminocyclopropane-1-carboxylate + H2O = 2-oxobutanoate + NH4(+). Its function is as follows. Catalyzes a cyclopropane ring-opening reaction, the irreversible conversion of 1-aminocyclopropane-1-carboxylate (ACC) to ammonia and alpha-ketobutyrate. Allows growth on ACC as a nitrogen source. The polypeptide is 1-aminocyclopropane-1-carboxylate deaminase (Paraburkholderia phytofirmans (strain DSM 17436 / LMG 22146 / PsJN) (Burkholderia phytofirmans)).